Consider the following 322-residue polypeptide: uncharacterized protein (322 aa).

A Radical SAM core domain is found at 26-267; the sequence is HFGHKVFKVA…CDQLEIIPPE (242 aa). [4Fe-4S] cluster contacts are provided by Cys-42, Cys-54, and Cys-57.

It belongs to the radical SAM superfamily. [4Fe-4S] cluster is required as a cofactor.

This is an uncharacterized protein from Bacillus subtilis (strain 168).